Consider the following 39-residue polypeptide: Mu-like prophage FluMu protein com (39 aa).

Belongs to the com family.

This is Mu-like prophage FluMu protein com from Haemophilus influenzae (strain ATCC 51907 / DSM 11121 / KW20 / Rd).